We begin with the raw amino-acid sequence, 339 residues long: MNQRNASMTVIGAGSYGTALAITLARNGHEVVLWGHDPEHIATLKRDRCNAAFLPDVPFPDTLHLESDLATALAASRNILVVVPSHVFGEVLRQIKPLMRPDARLVWATKGLEAETGRLLQDVAREALGDQIPLAVISGPTFAKELAAGLPTAISLASTDQTFADDLQQLLHCGKSFRVYSNPDFIGVQLGGAVKNVIAIGAGMSDGIGFGANARTALITRGLAEMSRLGAALGADPATFMGMAGLGDLVLTCTDNQSRNRRFGMMLGQGMDVQSAQEKIGQVVEGYRNTKEVRELAHRFGVEMPITEEIYQVLYCGKNAREAALTLLGRARKDERSSH.

Serine 15, tyrosine 16, histidine 36, and lysine 110 together coordinate NADPH. Lysine 110, glycine 139, and threonine 141 together coordinate sn-glycerol 3-phosphate. Alanine 143 serves as a coordination point for NADPH. 5 residues coordinate sn-glycerol 3-phosphate: lysine 195, aspartate 248, serine 258, arginine 259, and asparagine 260. Catalysis depends on lysine 195, which acts as the Proton acceptor. Arginine 259 is an NADPH binding site. 2 residues coordinate NADPH: valine 283 and glutamate 285.

This sequence belongs to the NAD-dependent glycerol-3-phosphate dehydrogenase family.

Its subcellular location is the cytoplasm. It catalyses the reaction sn-glycerol 3-phosphate + NAD(+) = dihydroxyacetone phosphate + NADH + H(+). It carries out the reaction sn-glycerol 3-phosphate + NADP(+) = dihydroxyacetone phosphate + NADPH + H(+). The protein operates within membrane lipid metabolism; glycerophospholipid metabolism. Its function is as follows. Catalyzes the reduction of the glycolytic intermediate dihydroxyacetone phosphate (DHAP) to sn-glycerol 3-phosphate (G3P), the key precursor for phospholipid synthesis. This is Glycerol-3-phosphate dehydrogenase [NAD(P)+] from Escherichia fergusonii (strain ATCC 35469 / DSM 13698 / CCUG 18766 / IAM 14443 / JCM 21226 / LMG 7866 / NBRC 102419 / NCTC 12128 / CDC 0568-73).